A 180-amino-acid polypeptide reads, in one-letter code: Large ribosomal subunit protein bL17 (180 aa).

The segment at 134–180 is disordered; sequence AQAKAKKAAAMPTEESEAKPAEEGDVVGASEPDAKAPEEPPAEAPEN.

This sequence belongs to the bacterial ribosomal protein bL17 family. In terms of assembly, part of the 50S ribosomal subunit. Contacts protein L32.

The chain is Large ribosomal subunit protein bL17 from Mycobacterium tuberculosis (strain ATCC 25177 / H37Ra).